A 168-amino-acid polypeptide reads, in one-letter code: Signal peptidase I V (168 aa).

The Cytoplasmic segment spans residues 1–6 (MKKRFW). Residues 7 to 26 (FLAGVVSVVLAIQVKNAVFI) form a helical membrane-spanning segment. The Extracellular portion of the chain corresponds to 27–168 (DYKVEGVSMN…NIVGVISDAE (142 aa)). Catalysis depends on residues Ser-34 and Lys-75.

The protein belongs to the peptidase S26 family.

It localises to the cell membrane. It catalyses the reaction Cleavage of hydrophobic, N-terminal signal or leader sequences from secreted and periplasmic proteins.. The polypeptide is Signal peptidase I V (sipV) (Bacillus subtilis (strain 168)).